Reading from the N-terminus, the 201-residue chain is Potassium-transporting ATPase KdpC subunit (201 aa).

A helical transmembrane segment spans residues 7–27 (PALVLLVALTAITGLAYPLAV).

Belongs to the KdpC family. As to quaternary structure, the system is composed of three essential subunits: KdpA, KdpB and KdpC.

The protein localises to the cell inner membrane. In terms of biological role, part of the high-affinity ATP-driven potassium transport (or Kdp) system, which catalyzes the hydrolysis of ATP coupled with the electrogenic transport of potassium into the cytoplasm. This subunit acts as a catalytic chaperone that increases the ATP-binding affinity of the ATP-hydrolyzing subunit KdpB by the formation of a transient KdpB/KdpC/ATP ternary complex. The polypeptide is Potassium-transporting ATPase KdpC subunit (Methylorubrum extorquens (strain CM4 / NCIMB 13688) (Methylobacterium extorquens)).